The chain runs to 785 residues: Cadherin-7 (785 aa).

An N-terminal signal peptide occupies residues 1-27 (MKLGKVELCHFLQLIALFLCFSGMSQA). A propeptide spanning residues 28–47 (ELPRSRSKPYFQSGRSRTKR) is cleaved from the precursor. At 28 to 607 (ELPRSRSKPY…AYVLPAGLST (580 aa)) the chain is on the extracellular side. Cadherin domains follow at residues 49 to 153 (WVWN…EPKF), 154 to 262 (LDGP…PPRF), 263 to 377 (PRRS…PPVF), 378 to 482 (SSPL…APEF), and 482 to 599 (FAMD…AEAY). N-linked (GlcNAc...) asparagine glycosylation is found at N449 and N530. Residues 608–628 (GALIAILACVLTLLVLILLIV) form a helical membrane-spanning segment. Topologically, residues 629–785 (TMRRRKKEPL…YGNGQESLYS (157 aa)) are cytoplasmic.

It is found in the cell membrane. Cadherins are calcium-dependent cell adhesion proteins. They preferentially interact with themselves in a homophilic manner in connecting cells; cadherins may thus contribute to the sorting of heterogeneous cell types. This is Cadherin-7 (Cdh7) from Mus musculus (Mouse).